A 220-amino-acid polypeptide reads, in one-letter code: Nitrile hydratase subunit beta (220 aa).

It belongs to the nitrile hydratase subunit beta family. In terms of assembly, heterodimer of an alpha and a beta chain.

The catalysed reaction is an aliphatic primary amide = an aliphatic nitrile + H2O. NHase catalyzes the hydration of various nitrile compounds to the corresponding amides. This Pseudomonas chlororaphis (Pseudomonas aureofaciens) protein is Nitrile hydratase subunit beta (nthB).